The primary structure comprises 182 residues: Bifunctional protein PyrR (182 aa).

Residues 97–109 (VVLVDDVIFRGRT) carry the PRPP-binding motif.

The protein belongs to the purine/pyrimidine phosphoribosyltransferase family. PyrR subfamily.

It carries out the reaction UMP + diphosphate = 5-phospho-alpha-D-ribose 1-diphosphate + uracil. Regulates the transcription of the pyrimidine nucleotide (pyr) operon in response to exogenous pyrimidines. Functionally, also displays a weak uracil phosphoribosyltransferase activity which is not physiologically significant. In Synechococcus sp. (strain JA-2-3B'a(2-13)) (Cyanobacteria bacterium Yellowstone B-Prime), this protein is Bifunctional protein PyrR.